Here is a 408-residue protein sequence, read N- to C-terminus: S-adenosylmethionine sensor upstream of mTORC1 (408 aa).

The segment covering 1–16 (MEAAPRSRPRPGGAAA) has biased composition (low complexity). The interval 1-37 (MEAAPRSRPRPGGAAASPPPPPPPPPPEQERKLEQEK) is disordered. Over residues 17 to 27 (SPPPPPPPPPP) the composition is skewed to pro residues. Residues 28–37 (EQERKLEQEK) are compositionally biased toward basic and acidic residues. Positions 97, 175, 193, 205, 206, and 247 each coordinate S-adenosyl-L-methionine.

It belongs to the BMT2/SAMTOR family. In terms of assembly, interacts with the GATOR1 complex; interaction is disrupted when SAMTOR binds S-adenosyl-L-methionine. Interacts with the KICSTOR complex; interaction is disrupted when SAMTOR binds S-adenosyl-L-methionine.

Functionally, S-adenosyl-L-methionine-binding protein that acts as an inhibitor of mTORC1 signaling via interaction with the GATOR1 and KICSTOR complexes. Acts as a sensor of S-adenosyl-L-methionine to signal methionine sufficiency to mTORC1: in presence of methionine, binds S-adenosyl-L-methionine, leading to disrupt interaction with the GATOR1 and KICSTOR complexes and promote mTORC1 signaling. Upon methionine starvation, S-adenosyl-L-methionine levels are reduced, thereby promoting the association with GATOR1 and KICSTOR, leading to inhibit mTORC1 signaling. Probably also acts as a S-adenosyl-L-methionine-dependent methyltransferase. This is S-adenosylmethionine sensor upstream of mTORC1 from Gallus gallus (Chicken).